A 314-amino-acid polypeptide reads, in one-letter code: Methionyl-tRNA formyltransferase (314 aa).

Residue 110 to 113 (SLLP) participates in (6S)-5,6,7,8-tetrahydrofolate binding.

Belongs to the Fmt family.

It carries out the reaction L-methionyl-tRNA(fMet) + (6R)-10-formyltetrahydrofolate = N-formyl-L-methionyl-tRNA(fMet) + (6S)-5,6,7,8-tetrahydrofolate + H(+). In terms of biological role, attaches a formyl group to the free amino group of methionyl-tRNA(fMet). The formyl group appears to play a dual role in the initiator identity of N-formylmethionyl-tRNA by promoting its recognition by IF2 and preventing the misappropriation of this tRNA by the elongation apparatus. This is Methionyl-tRNA formyltransferase from Bacillus anthracis (strain A0248).